Reading from the N-terminus, the 226-residue chain is TPD1 protein homolog 1A (226 aa).

The signal sequence occupies residues 1-35 (MRVSSASSTPPPPAFAAAAWAVVLLAMLRSDVALA).

As to quaternary structure, interacts with MSP1. As to expression, expressed in roots, and anthers and ovules during meiosis.

In terms of biological role, involved in cell specification during anther development. Required for the differentiation of primary parietal cells into secondary parietal cells in anthers. May serve as an extracellular ligand for the MSP1 receptor kinase to limit sporocyte number in ovules. This chain is TPD1 protein homolog 1A, found in Oryza sativa subsp. japonica (Rice).